Here is a 432-residue protein sequence, read N- to C-terminus: Homogentisate 1,2-dioxygenase (432 aa).

H287 functions as the Proton acceptor in the catalytic mechanism. Fe cation contacts are provided by H330 and E336. Residues Y345 and H366 each coordinate homogentisate. H366 provides a ligand contact to Fe cation.

This sequence belongs to the homogentisate dioxygenase family. As to quaternary structure, hexamer; dimer of trimers. It depends on Fe cation as a cofactor.

The catalysed reaction is homogentisate + O2 = 4-maleylacetoacetate + H(+). The protein operates within amino-acid degradation; L-phenylalanine degradation; acetoacetate and fumarate from L-phenylalanine: step 4/6. Its function is as follows. Involved in the catabolism of homogentisate (2,5-dihydroxyphenylacetate or 2,5-OH-PhAc), a central intermediate in the degradation of phenylalanine and tyrosine. Catalyzes the oxidative ring cleavage of the aromatic ring of homogentisate to yield maleylacetoacetate. The chain is Homogentisate 1,2-dioxygenase from Pseudomonas aeruginosa (strain ATCC 15692 / DSM 22644 / CIP 104116 / JCM 14847 / LMG 12228 / 1C / PRS 101 / PAO1).